The chain runs to 125 residues: Calcitonin receptor-stimulating peptide 1 (125 aa).

Positions 1–25 (MGFWKFPPFLVLSILVLYQAGMFHA) are cleaved as a signal peptide. Positions 26–77 (APFRSVFDGRFDPATLDEEESRLLLAAMVNDYEQMRTRESEKAQKTEGSRIQ) are excised as a propeptide. The cysteines at positions 81 and 86 are disulfide-linked.

The protein belongs to the calcitonin family.

The protein resides in the secreted. Functionally, stimulates cAMP production via the calcitonin receptor (CT) but not via the CT-like (CL) receptor. This is Calcitonin receptor-stimulating peptide 1 (CRSP1) from Ovis aries (Sheep).